A 1791-amino-acid chain; its full sequence is 1-phosphatidylinositol-3-phosphate 5-kinase FAB1B (1791 aa).

The segment at 39–105 (DQSCRVCYEC…VCNYCFRQWE (67 aa)) adopts an FYVE-type zinc-finger fold. Positions 45, 48, 61, 64, 69, 72, 97, and 100 each coordinate Zn(2+). Disordered regions lie at residues 166 to 186 (HGVSSMETSVTKQGKETSRRS), 279 to 370 (EQFQ…DRTT), 770 to 790 (SDLSGRSVPVDTPADKSNPIV), and 834 to 859 (QQNNEKPKETQSQKEEFPPSPSDHQS). Positions 279-293 (EQFQKKSEHDGRDEC) are enriched in basic and acidic residues. Positions 324 to 345 (PENEEDERESALFDEEDNEGDA) are enriched in acidic residues. The segment covering 838–850 (EKPKETQSQKEEF) has biased composition (basic and acidic residues). Residues 1077 to 1111 (EKGFRRRIGELEEVLQKEKAEFEENMQKILHREVN) are a coiled coil. The segment covering 1151 to 1164 (NSDDTKREENEKPP) has biased composition (basic and acidic residues). Residues 1151–1242 (NSDDTKREEN…DTSYPLENKV (92 aa)) are disordered. Composition is skewed to polar residues over residues 1167-1188 (KSQTLPEMNAGTNSLLTGSEVN) and 1196-1206 (TGDTGSLNNVQ). Positions 1433-1758 (SELNIPRPVD…RFRKAMTTYF (326 aa)) constitute a PIPK domain. The interval 1769–1791 (NVVANNSKSDQPEETSQAGTQAE) is disordered. The segment covering 1771–1791 (VANNSKSDQPEETSQAGTQAE) has biased composition (polar residues).

In terms of assembly, component of the PI(3,5)P2 regulatory complex at least composed of ATG18, SAC/FIG4, FAB1 and VAC14. The cofactor is Mg(2+). Requires Mn(2+) as cofactor. Ubiquitous with highest expression levels in the root hair zone, pollen, and stamens.

The protein resides in the endosome membrane. The enzyme catalyses a 1,2-diacyl-sn-glycero-3-phospho-(1D-myo-inositol-3-phosphate) + ATP = a 1,2-diacyl-sn-glycero-3-phospho-(1D-myo-inositol-3,5-bisphosphate) + ADP + H(+). Functionally, the PI(3,5)P2 regulatory complex regulates both the synthesis and turnover of phosphatidylinositol 3,5-bisphosphate (PtdIns(3,5)P2). Catalyzes the phosphorylation of phosphatidylinositol 3-phosphate on the fifth hydroxyl of the myo-inositol ring, to form phosphatidylinositol 3,5-bisphosphate. Plays an important role in maintenance of endomembrane homeostasis including endocytosis, vacuole formation, and vacuolar acidification processes. Required for development of viable pollen. Might mediate recycling of auxin transporters. This is 1-phosphatidylinositol-3-phosphate 5-kinase FAB1B (FAB1B) from Arabidopsis thaliana (Mouse-ear cress).